The sequence spans 295 residues: Glycine N-phenylacetyltransferase (295 aa).

Position 43 is an N6-acetyllysine (K43). Position 48 is an N6-acetyllysine; alternate (K48). K48 is subject to N6-succinyllysine; alternate. An N6-acetyllysine modification is found at K80. N6-acetyllysine; alternate is present on K182. K182 carries the post-translational modification N6-succinyllysine; alternate.

Belongs to the glycine N-acyltransferase family.

Its subcellular location is the mitochondrion. It carries out the reaction phenylacetyl-CoA + glycine = phenylacetylglycine + CoA + H(+). In terms of biological role, mitochondrial acyltransferase which transfers the acyl group to the N-terminus of glycine. Can conjugate a multitude of substrates to form a variety of N-acylglycines. Catalyzes the conjugation of arylacetic acids with glycine but does not have activity towards any alkyl-CoA. The polypeptide is Glycine N-phenylacetyltransferase (Bos taurus (Bovine)).